Reading from the N-terminus, the 134-residue chain is uncharacterized protein (134 aa).

This is an uncharacterized protein from Ictaluridae (bullhead catfishes).